We begin with the raw amino-acid sequence, 90 residues long: Putative Fis-like DNA-binding protein (90 aa).

Positions 66–85 (QSRAAALLGIHRATLRKKLK) form a DNA-binding region, H-T-H motif.

It belongs to the transcriptional regulatory Fis family.

The sequence is that of Putative Fis-like DNA-binding protein from Xylella fastidiosa (strain Temecula1 / ATCC 700964).